The sequence spans 270 residues: 3-phenylpropionate-dihydrodiol/cinnamic acid-dihydrodiol dehydrogenase (270 aa).

Residue 10-34 (FITGGGSGLGLALVERFIEEGAQVA) coordinates NAD(+). Ser143 contributes to the substrate binding site. Residue Tyr156 is the Proton acceptor of the active site.

It belongs to the short-chain dehydrogenases/reductases (SDR) family.

It carries out the reaction 3-(cis-5,6-dihydroxycyclohexa-1,3-dien-1-yl)propanoate + NAD(+) = 3-(2,3-dihydroxyphenyl)propanoate + NADH + H(+). It catalyses the reaction (2E)-3-(cis-5,6-dihydroxycyclohexa-1,3-dien-1-yl)prop-2-enoate + NAD(+) = (2E)-3-(2,3-dihydroxyphenyl)prop-2-enoate + NADH + H(+). Its pathway is aromatic compound metabolism; 3-phenylpropanoate degradation. Converts 3-phenylpropionate-dihydrodiol (PP-dihydrodiol) and cinnamic acid-dihydrodiol (CI-dihydrodiol) into 3-(2,3-dihydroxylphenyl)propanoic acid (DHPP) and 2,3-dihydroxicinnamic acid (DHCI), respectively. This Escherichia coli O157:H7 protein is 3-phenylpropionate-dihydrodiol/cinnamic acid-dihydrodiol dehydrogenase.